The sequence spans 220 residues: Ribosomal RNA small subunit methyltransferase G (220 aa).

3 residues coordinate S-adenosyl-L-methionine: Gly78, Leu83, and Arg144.

It belongs to the methyltransferase superfamily. RNA methyltransferase RsmG family.

It localises to the cytoplasm. The catalysed reaction is guanosine(527) in 16S rRNA + S-adenosyl-L-methionine = N(7)-methylguanosine(527) in 16S rRNA + S-adenosyl-L-homocysteine. In terms of biological role, specifically methylates the N7 position of guanine in position 527 of 16S rRNA. The protein is Ribosomal RNA small subunit methyltransferase G of Alkalilimnicola ehrlichii (strain ATCC BAA-1101 / DSM 17681 / MLHE-1).